The following is a 156-amino-acid chain: ATP synthase subunit b (156 aa).

Residues 5 to 25 form a helical membrane-spanning segment; it reads VTLIGQTVAFIIFVWFCMKFV.

This sequence belongs to the ATPase B chain family. F-type ATPases have 2 components, F(1) - the catalytic core - and F(0) - the membrane proton channel. F(1) has five subunits: alpha(3), beta(3), gamma(1), delta(1), epsilon(1). F(0) has three main subunits: a(1), b(2) and c(10-14). The alpha and beta chains form an alternating ring which encloses part of the gamma chain. F(1) is attached to F(0) by a central stalk formed by the gamma and epsilon chains, while a peripheral stalk is formed by the delta and b chains.

The protein localises to the cell inner membrane. F(1)F(0) ATP synthase produces ATP from ADP in the presence of a proton or sodium gradient. F-type ATPases consist of two structural domains, F(1) containing the extramembraneous catalytic core and F(0) containing the membrane proton channel, linked together by a central stalk and a peripheral stalk. During catalysis, ATP synthesis in the catalytic domain of F(1) is coupled via a rotary mechanism of the central stalk subunits to proton translocation. Functionally, component of the F(0) channel, it forms part of the peripheral stalk, linking F(1) to F(0). The chain is ATP synthase subunit b from Shewanella loihica (strain ATCC BAA-1088 / PV-4).